The sequence spans 187 residues: Probable nicotinate-nucleotide adenylyltransferase (187 aa).

This sequence belongs to the NadD family.

It carries out the reaction nicotinate beta-D-ribonucleotide + ATP + H(+) = deamido-NAD(+) + diphosphate. Its pathway is cofactor biosynthesis; NAD(+) biosynthesis; deamido-NAD(+) from nicotinate D-ribonucleotide: step 1/1. Functionally, catalyzes the reversible adenylation of nicotinate mononucleotide (NaMN) to nicotinic acid adenine dinucleotide (NaAD). This Anaeromyxobacter dehalogenans (strain 2CP-1 / ATCC BAA-258) protein is Probable nicotinate-nucleotide adenylyltransferase.